A 376-amino-acid chain; its full sequence is MASAPWPERVPRLLAPRLPSYPPPPPTVGLPSMEQEEAYLELYLDQCAAQDGLAPPRSPLFSPVVPYDMYILNASNPDTAFNSNPEVKETSGDFSSVDLSFLPDEVTQENKDQPVISKHETEENSESQSPQSRLPSPSEQDVGLGLNSSSLSNSHSQLHPGDTDSVQPSPEKPNSDSLSLASITPMTPMTPISECCGIVPQLQNIVSTVNLACKLDLKKIALHAKNAEYNPKRFAAVIMRIREPRTTALIFSSGKMVCTGAKSEEQSRLAARKYARVVQKLGFPAKFLDFKIQNMVGSCDVKFPIRLEGLVLTHQQFSSYEPELFPGLIYRMIKPRIVLLIFVSGKVVLTGAKVRAEIYEAFENIYPILKGFRKTT.

The interval 103–184 (PDEVTQENKD…SDSLSLASIT (82 aa)) is disordered. Positions 108–122 (QENKDQPVISKHETE) are enriched in basic and acidic residues. Over residues 126–159 (ESQSPQSRLPSPSEQDVGLGLNSSSLSNSHSQLH) the composition is skewed to low complexity. A compositionally biased stretch (polar residues) spans 175–184 (SDSLSLASIT).

The protein belongs to the TBP family. As to quaternary structure, interacts with TAF3.

The protein localises to the cytoplasm. Its subcellular location is the nucleus. In terms of biological role, transcription factor required in complex with TAF3 for the differentiation of myoblasts into myocytes. The complex replaces TFIID at specific promoters at an early stage in the differentiation process. In Pan troglodytes (Chimpanzee), this protein is TATA box-binding protein-like 2.